The sequence spans 491 residues: Sucrose transport protein SUC7 (491 aa).

Over residues 1–13 the composition is skewed to basic and acidic residues; the sequence is MSDLQANKDETTV. A disordered region spans residues 1–25; that stretch reads MSDLQANKDETTVDRQSSSSVDLDG. Over 1–32 the chain is Cytoplasmic; that stretch reads MSDLQANKDETTVDRQSSSSVDLDGPSPLRKM. Ser-17 bears the Phosphoserine mark. The chain crosses the membrane as a helical span at residues 33–53; the sequence is ISVASIAAGIQFGWALQLSLL. Over 54-67 the chain is Extracellular; the sequence is TPYVQLLGVPHKWP. Residues 68 to 88 form a helical membrane-spanning segment; it reads SFIWLCGPVSGLLVQPSVGYF. The Cytoplasmic segment spans residues 89-100; sequence SDRCTSRFGRRR. A helical membrane pass occupies residues 101–121; the sequence is PFIATGALLVAVSVVLIGYAA. Over 122–138 the chain is Extracellular; that stretch reads DFGHSMGDKIDKPVKMR. A helical membrane pass occupies residues 139–159; it reads AVVIFALGFWILDVANNTLQG. The Cytoplasmic segment spans residues 160–180; that stretch reads PCRAFLGDLAAGDAQKTRTAN. The chain crosses the membrane as a helical span at residues 181-201; the sequence is AFFSFFMAVGNVLGYAAGSYT. Residues 202 to 223 lie on the Extracellular side of the membrane; sequence NLYKIFPFTMTKACDIYCANLK. The chain crosses the membrane as a helical span at residues 224-244; it reads SCFFLSITLLLVVTIIALWYV. Over 245–276 the chain is Cytoplasmic; sequence EDKQWSPKADSDNEKTPFFGEIFGAFKVMKRP. The helical transmembrane segment at 277-297 threads the bilayer; sequence MWMLLIVTALNWIAWFPFLLY. At 298–323 the chain is on the extracellular side; it reads DTDWMGREVYGGDSKGDDKMKKLYNQ. Residues 324–344 form a helical membrane-spanning segment; that stretch reads GIHVGALGLMLNSIVLGVMSL. The Cytoplasmic segment spans residues 345–358; it reads GIEGISRKMGGAKR. A helical transmembrane segment spans residues 359-379; it reads LWGAVNIILAVCLAMTVLVTK. The Extracellular segment spans residues 380 to 402; the sequence is KAEEHRRIAGPMALPTDGIRAGA. A helical transmembrane segment spans residues 403–423; that stretch reads LTLFALLGIPLAITFSIPFAL. The Cytoplasmic portion of the chain corresponds to 424–443; sequence ASIISSSSGAGQRLSLGVLN. The chain crosses the membrane as a helical span at residues 444–464; sequence MAIVIPQMIVSFGVGPIDALF. At 465-468 the chain is on the extracellular side; it reads GDGN. The chain crosses the membrane as a helical span at residues 469 to 489; it reads LPGFVVGAIAAAVSSIVAFTV. Residues 490–491 lie on the Cytoplasmic side of the membrane; it reads LP.

Belongs to the glycoside-pentoside-hexuronide (GPH) cation symporter transporter (TC 2.A.2.4) family. In terms of tissue distribution, expressed in anthers.

Its subcellular location is the cell membrane. It functions in the pathway glycan biosynthesis; sucrose metabolism. Its function is as follows. May be responsible for the transport of glucosides into the cell, with the concomitant uptake of protons (symport system). Does not seem to transport sucrose. In Arabidopsis thaliana (Mouse-ear cress), this protein is Sucrose transport protein SUC7.